The following is a 108-amino-acid chain: uncharacterized protein (108 aa).

Transmembrane regions (helical) follow at residues 51 to 71 (VFAA…FCFL) and 86 to 106 (PLST…KSLL).

The protein localises to the membrane. This is an uncharacterized protein from Saccharomyces cerevisiae (strain ATCC 204508 / S288c) (Baker's yeast).